The following is a 347-amino-acid chain: Protein RecA (347 aa).

Residue 64-71 (GPESSGKT) participates in ATP binding.

The protein belongs to the RecA family.

It localises to the cytoplasm. Its function is as follows. Can catalyze the hydrolysis of ATP in the presence of single-stranded DNA, the ATP-dependent uptake of single-stranded DNA by duplex DNA, and the ATP-dependent hybridization of homologous single-stranded DNAs. It interacts with LexA causing its activation and leading to its autocatalytic cleavage. The polypeptide is Protein RecA (Bartonella henselae (strain ATCC 49882 / DSM 28221 / CCUG 30454 / Houston 1) (Rochalimaea henselae)).